Here is a 114-residue protein sequence, read N- to C-terminus: FK506-binding protein 1 (114 aa).

The PPIase FKBP-type domain occupies 26–114 (GDLVTIHYTG…IFEVELLKVN (89 aa)).

It belongs to the FKBP-type PPIase family. FKBP1 subfamily.

It localises to the cytoplasm. It catalyses the reaction [protein]-peptidylproline (omega=180) = [protein]-peptidylproline (omega=0). With respect to regulation, inhibited by both FK506 and rapamycin. In terms of biological role, PPIases accelerate the folding of proteins. It catalyzes the cis-trans isomerization of proline imidic peptide bonds in oligopeptides. This Eremothecium gossypii (strain ATCC 10895 / CBS 109.51 / FGSC 9923 / NRRL Y-1056) (Yeast) protein is FK506-binding protein 1 (FPR1).